The following is a 463-amino-acid chain: MMKIFNTLKNKKEKFKPINSNIVNVYVCGITPYDLCHIGHARTLVFFDIMIKYFQYKGYRTNYIRNITDIDDKIINKAFHKKEKYNLLSDFMIKEMKYDLNSLNIMPPNNEPRVTNHISDILEMIKILLEKKHAYISKTGDVVFDISTYRDYGKLSKRFEEKKQLLNNKKNKINFKTKKEKDFVLWKMSKPNEPSWKSPWGHGRPGWHIECSAISDKTLGNIFDIHGGGSDLIFPHHENEIAQSKCANSKFNVNFWVHTGMVMFKKEKMSKSLGNSCLIREIVKKYDADTLKYFLTSSHYRSQITYSVDNMEKSKSAVKRLYRSLHNTNYFYNLPIKEKFTSKFIDAMNDDFNTPKAYSVLFSISRQINYFKNKNPEKANQLSTVLKNLSNIIGILNENPDSYLNNKLKFSKDKINKIKSIIKKRENYRKLKQWEKADEERKKLKYIGVCLEDTIQGTKWFKL.

Position 28 (cysteine 28) interacts with Zn(2+). The short motif at 30–40 (ITPYDLCHIGH) is the 'HIGH' region element. Residues cysteine 211, histidine 236, and glutamate 240 each coordinate Zn(2+). Positions 268 to 272 (KMSKS) match the 'KMSKS' region motif. Position 271 (lysine 271) interacts with ATP.

The protein belongs to the class-I aminoacyl-tRNA synthetase family. In terms of assembly, monomer. Zn(2+) is required as a cofactor.

It localises to the cytoplasm. It catalyses the reaction tRNA(Cys) + L-cysteine + ATP = L-cysteinyl-tRNA(Cys) + AMP + diphosphate. The polypeptide is Cysteine--tRNA ligase (Wigglesworthia glossinidia brevipalpis).